A 91-amino-acid chain; its full sequence is uncharacterized protein (91 aa).

A helical membrane pass occupies residues 12-34; the sequence is FAIVYANITFLFYYLLDFTLPFH.

The protein localises to the membrane. This is an uncharacterized protein from Saccharomyces cerevisiae (strain ATCC 204508 / S288c) (Baker's yeast).